A 261-amino-acid polypeptide reads, in one-letter code: 3-hydroxyacyl-CoA dehydrogenase type-2 (261 aa).

N-acetylalanine is present on alanine 2. NAD(+) is bound by residues serine 20 and aspartate 41. Residue lysine 53 is modified to N6-acetyllysine; alternate. The residue at position 53 (lysine 53) is an N6-succinyllysine; alternate. Residue valine 65 participates in NAD(+) binding. N6-acetyllysine is present on lysine 69. Cysteine 91 lines the NAD(+) pocket. N6-acetyllysine occurs at positions 99 and 105. Lysine 107 is subject to N6-acetyllysine; alternate. Lysine 107 is subject to N6-succinyllysine; alternate. Residue serine 155 participates in substrate binding. NAD(+)-binding residues include tyrosine 168, lysine 172, phenylalanine 201, and threonine 203. Tyrosine 168 functions as the Proton acceptor in the catalytic mechanism. Residue lysine 212 is modified to N6-acetyllysine; alternate. Residue lysine 212 is modified to N6-succinyllysine; alternate.

The protein belongs to the short-chain dehydrogenases/reductases (SDR) family. In terms of assembly, homotetramer. Component of mitochondrial ribonuclease P, a complex composed of TRMT10C/MRPP1, HSD17B10/MRPP2 and PRORP/MRPP3. Interacts with TRMT10C/MRPP1; forming the MRPP1-MRPP2 subcomplex of the mitochondrial ribonuclease P complex.

Its subcellular location is the mitochondrion. It is found in the mitochondrion matrix. It localises to the mitochondrion nucleoid. It catalyses the reaction a (3S)-3-hydroxyacyl-CoA + NAD(+) = a 3-oxoacyl-CoA + NADH + H(+). The enzyme catalyses (2S,3S)-3-hydroxy-2-methylbutanoyl-CoA + NAD(+) = 2-methyl-3-oxobutanoyl-CoA + NADH + H(+). The catalysed reaction is testosterone + NAD(+) = androst-4-ene-3,17-dione + NADH + H(+). It carries out the reaction 5alpha-androstane-3alpha,17beta-diol + NAD(+) = 17beta-hydroxy-5alpha-androstan-3-one + NADH + H(+). It catalyses the reaction 17beta-estradiol + NAD(+) = estrone + NADH + H(+). The enzyme catalyses cholate + NAD(+) = 3alpha,12alpha-dihydroxy-7-oxo-5beta-cholanate + NADH + H(+). The catalysed reaction is (3S)-3-hydroxybutanoyl-CoA + NAD(+) = acetoacetyl-CoA + NADH + H(+). It carries out the reaction (3S)-hydroxyoctanoyl-CoA + NAD(+) = 3-oxooctanoyl-CoA + NADH + H(+). It catalyses the reaction (3S)-hydroxyhexadecanoyl-CoA + NAD(+) = 3-oxohexadecanoyl-CoA + NADH + H(+). The enzyme catalyses 17beta-hydroxy-5alpha-androstan-3-one + NAD(+) = 5alpha-androstan-3,17-dione + NADH + H(+). The catalysed reaction is 5alpha-pregnan-20beta-ol-3-one + NAD(+) = 5alpha-pregnane-3,20-dione + NADH + H(+). It carries out the reaction 3alpha-hydroxy-5alpha-pregnan-20-one + NAD(+) = 5alpha-pregnane-3,20-dione + NADH + H(+). It catalyses the reaction cortisone + NAD(+) = 17alpha-hydroxypregn-4-en-3,11,20-trione-21-al + NADH + H(+). The enzyme catalyses 11-dehydrocorticosterone + NAD(+) = pregn-4-ene-3,11,20,21-tetraone + NADH + H(+). The catalysed reaction is cortisol + NAD(+) = 11beta,17alpha-dihydroxypregn-4-ene-3,20,21-trione + NADH + H(+). It carries out the reaction chenodeoxycholate + NAD(+) = 7-oxolithocholate + NADH + H(+). It catalyses the reaction ursodeoxycholate + NAD(+) = 7-oxolithocholate + NADH + H(+). The enzyme catalyses 3beta,7beta-dihydroxy-5beta-cholan-24-oate + NAD(+) = 3beta-hydroxy-7-oxo-5beta-cholan-24-oate + NADH + H(+). It functions in the pathway amino-acid degradation; L-isoleucine degradation. Its pathway is lipid metabolism; fatty acid beta-oxidation. It participates in steroid metabolism. The protein operates within lipid metabolism; bile acid biosynthesis. Mitochondrial dehydrogenase involved in pathways of fatty acid, branched-chain amino acid and steroid metabolism. Acts as (S)-3-hydroxyacyl-CoA dehydrogenase in mitochondrial fatty acid beta-oxidation, a major degradation pathway of fatty acids. Catalyzes the third step in the beta-oxidation cycle, namely the reversible conversion of (S)-3-hydroxyacyl-CoA to 3-ketoacyl-CoA. Preferentially accepts straight medium- and short-chain acyl-CoA substrates with highest efficiency for (3S)-hydroxybutanoyl-CoA. Acts as 3-hydroxy-2-methylbutyryl-CoA dehydrogenase in branched-chain amino acid catabolic pathway. Catalyzes the oxidation of 3-hydroxy-2-methylbutanoyl-CoA into 2-methyl-3-oxobutanoyl-CoA, a step in isoleucine degradation pathway. Has hydroxysteroid dehydrogenase activity toward steroid hormones and bile acids. Catalyzes the oxidation of 3alpha-, 17beta-, 20beta- and 21-hydroxysteroids and 7alpha- and 7beta-hydroxy bile acids. Oxidizes allopregnanolone/brexanolone at the 3alpha-hydroxyl group, which is known to be critical for the activation of gamma-aminobutyric acid receptors (GABAARs) chloride channel. Has phospholipase C-like activity toward cardiolipin and its oxidized species. Likely oxidizes the 2'-hydroxyl in the head group of cardiolipin to form a ketone intermediate that undergoes nucleophilic attack by water and fragments into diacylglycerol, dihydroxyacetone and orthophosphate. Has higher affinity for cardiolipin with oxidized fatty acids and may degrade these species during the oxidative stress response to protect cells from apoptosis. By interacting with intracellular amyloid-beta, it may contribute to the neuronal dysfunction associated with Alzheimer disease (AD). Essential for structural and functional integrity of mitochondria. Functionally, in addition to mitochondrial dehydrogenase activity, moonlights as a component of mitochondrial ribonuclease P, a complex that cleaves tRNA molecules in their 5'-ends. Together with TRMT10C/MRPP1, forms a subcomplex of the mitochondrial ribonuclease P, named MRPP1-MRPP2 subcomplex, which displays functions that are independent of the ribonuclease P activity. The MRPP1-MRPP2 subcomplex catalyzes the formation of N(1)-methylguanine and N(1)-methyladenine at position 9 (m1G9 and m1A9, respectively) in tRNAs; HSD17B10/MRPP2 acting as a non-catalytic subunit. The MRPP1-MRPP2 subcomplex also acts as a tRNA maturation platform: following 5'-end cleavage by the mitochondrial ribonuclease P complex, the MRPP1-MRPP2 subcomplex enhances the efficiency of 3'-processing catalyzed by ELAC2, retains the tRNA product after ELAC2 processing and presents the nascent tRNA to the mitochondrial CCA tRNA nucleotidyltransferase TRNT1 enzyme. Associates with mitochondrial DNA complexes at the nucleoids to initiate RNA processing and ribosome assembly. This chain is 3-hydroxyacyl-CoA dehydrogenase type-2 (Hsd17b10), found in Mus musculus (Mouse).